The chain runs to 850 residues: Protein translocase subunit SecA 2 (850 aa).

Residues Gln-83, 101 to 105, and Asp-491 each bind ATP; that span reads GEGKT.

Belongs to the SecA family. Monomer and homodimer. Part of the essential Sec protein translocation apparatus which comprises SecA, SecYEG and auxiliary proteins SecDF. Other proteins may also be involved.

Its subcellular location is the cell membrane. The protein localises to the cytoplasm. It carries out the reaction ATP + H2O + cellular proteinSide 1 = ADP + phosphate + cellular proteinSide 2.. Its function is as follows. Part of the Sec protein translocase complex. Interacts with the SecYEG preprotein conducting channel. Has a central role in coupling the hydrolysis of ATP to the transfer of proteins into and across the cell membrane, serving as an ATP-driven molecular motor driving the stepwise translocation of polypeptide chains across the membrane. This is Protein translocase subunit SecA 2 from Mycolicibacterium vanbaalenii (strain DSM 7251 / JCM 13017 / BCRC 16820 / KCTC 9966 / NRRL B-24157 / PYR-1) (Mycobacterium vanbaalenii).